Here is a 170-residue protein sequence, read N- to C-terminus: Adenine phosphoribosyltransferase (170 aa).

It belongs to the purine/pyrimidine phosphoribosyltransferase family. In terms of assembly, homodimer.

It localises to the cytoplasm. It carries out the reaction AMP + diphosphate = 5-phospho-alpha-D-ribose 1-diphosphate + adenine. The protein operates within purine metabolism; AMP biosynthesis via salvage pathway; AMP from adenine: step 1/1. Functionally, catalyzes a salvage reaction resulting in the formation of AMP, that is energically less costly than de novo synthesis. In Oceanobacillus iheyensis (strain DSM 14371 / CIP 107618 / JCM 11309 / KCTC 3954 / HTE831), this protein is Adenine phosphoribosyltransferase.